A 547-amino-acid chain; its full sequence is Serine/threonine-protein kinase RIO2 (547 aa).

Residues 97–273 (VGNQMGVGKE…RDVKCIREFF (177 aa)) enclose the Protein kinase domain. ATP is bound at residue Lys123. The active-site Proton acceptor is the Asp228. A phosphoserine mark is found at Ser332, Ser337, Ser350, Ser362, Ser385, and Ser390. A disordered region spans residues 352–385 (LEKEADPADESGGSWCCSSTDSKQIKDGGLPEES). Residues 399–408 (AVEEMERQVL) carry the Nuclear export signal motif. The disordered stretch occupies residues 404–445 (ERQVLPHRSVTEFSEESRRTENDGQPGQRSPAGSEDCDDEPP). A phosphoserine mark is found at Ser412, Ser417, Ser433, Ser437, and Ser543.

It belongs to the protein kinase superfamily. RIO-type Ser/Thr kinase family. Associated with late 40S pre-ribosomal particles. Interacts with PLK1 (via its N-terminus). The cofactor is Mg(2+). Autophosphorylated (in vitro). Phosphorylation affects the timing of the metaphase-anaphase transition.

Its subcellular location is the cytoplasm. It catalyses the reaction L-seryl-[protein] + ATP = O-phospho-L-seryl-[protein] + ADP + H(+). The catalysed reaction is L-threonyl-[protein] + ATP = O-phospho-L-threonyl-[protein] + ADP + H(+). In terms of biological role, serine/threonine-protein kinase involved in the final steps of cytoplasmic maturation of the 40S ribosomal subunit. Involved in export of the 40S pre-ribosome particles (pre-40S) from the nucleus to the cytoplasm. Its kinase activity is required for the release of NOB1, PNO1 and LTV1 from the late pre-40S and the processing of 18S-E pre-rRNA to the mature 18S rRNA. May regulate the timing of the metaphase-anaphase transition during mitotic progression, and its phosphorylation, may regulate this function. The chain is Serine/threonine-protein kinase RIO2 (Riok2) from Mus musculus (Mouse).